The following is a 297-amino-acid chain: Transcriptional regulator protein Pur-beta (297 aa).

Disordered regions lie at residues 1-26 (MADG…EQET) and 275-297 (QERH…VDDD). Position 2 is an N-acetylalanine (A2). Positions 23-246 (EQETQELASK…LRVSEVKPSY (224 aa)) are DNA-binding. The segment covering 275–288 (QERHRDKMYERREE) has biased composition (basic and acidic residues).

This sequence belongs to the PUR DNA-binding protein family.

The protein resides in the nucleus. Its function is as follows. Transcriptional regulator which can act as an activator or a repressor. This is Transcriptional regulator protein Pur-beta (purb) from Danio rerio (Zebrafish).